We begin with the raw amino-acid sequence, 163 residues long: Nucleotide-binding protein RBAM_011030 (163 aa).

This sequence belongs to the YajQ family.

In terms of biological role, nucleotide-binding protein. This is Nucleotide-binding protein RBAM_011030 from Bacillus velezensis (strain DSM 23117 / BGSC 10A6 / LMG 26770 / FZB42) (Bacillus amyloliquefaciens subsp. plantarum).